A 411-amino-acid polypeptide reads, in one-letter code: Argininosuccinate synthase (411 aa).

ATP-binding positions include 10–18 (AYSGGLDTS) and A37. L-citrulline is bound by residues Y89 and S94. G119 serves as a coordination point for ATP. The L-aspartate site is built by T121, N125, and D126. N125 is an L-citrulline binding site. L-citrulline-binding residues include R129, S178, S187, E263, and Y275.

This sequence belongs to the argininosuccinate synthase family. Type 1 subfamily. As to quaternary structure, homotetramer.

Its subcellular location is the cytoplasm. It carries out the reaction L-citrulline + L-aspartate + ATP = 2-(N(omega)-L-arginino)succinate + AMP + diphosphate + H(+). The protein operates within amino-acid biosynthesis; L-arginine biosynthesis; L-arginine from L-ornithine and carbamoyl phosphate: step 2/3. This chain is Argininosuccinate synthase, found in Aeromonas salmonicida (strain A449).